The chain runs to 122 residues: Large ribosomal subunit protein uL14 (122 aa).

Belongs to the universal ribosomal protein uL14 family. As to quaternary structure, part of the 50S ribosomal subunit. Forms a cluster with proteins L3 and L19. In the 70S ribosome, L14 and L19 interact and together make contacts with the 16S rRNA in bridges B5 and B8.

Functionally, binds to 23S rRNA. Forms part of two intersubunit bridges in the 70S ribosome. The protein is Large ribosomal subunit protein uL14 of Granulibacter bethesdensis (strain ATCC BAA-1260 / CGDNIH1).